The chain runs to 111 residues: uncharacterized protein (111 aa).

The next 4 membrane-spanning stretches (helical) occupy residues tryptophan 3–alanine 23, aspartate 24–isoleucine 44, alanine 54–leucine 74, and alanine 80–threonine 100.

Belongs to the drug/metabolite transporter (DMT) superfamily. Small multidrug resistance (SMR) (TC 2.A.7.1) family.

Its subcellular location is the cell membrane. This is an uncharacterized protein from Bacillus subtilis (strain 168).